Reading from the N-terminus, the 269-residue chain is MKHIPRKRFGQHFLADQSVLDRIVQLIDPQPGEALVEIGPGLGAMTDPVVERCKRLTVVELDRDLAARLRKRPELTVIESDVLKVDFTALAQAAGRPVRVIGNLPYNISSPILFHLLEQVASVQDQHFMLQKEVVDRMASAPGSKDYGRLSVMLQWRYQIESLLDVPPESFDPPPRVDSAIVRMLPLAQPPAVDPKLLGELVTVAFSQRRKMLRNTLGRWLEAREHGGAFDLTRRAEEVPVAEFVALTMAIQQTPSNSPLTAGATPDAA.

The S-adenosyl-L-methionine site is built by His-12, Leu-14, Gly-39, Glu-60, Asp-81, and Asn-103.

Belongs to the class I-like SAM-binding methyltransferase superfamily. rRNA adenine N(6)-methyltransferase family. RsmA subfamily.

It localises to the cytoplasm. It carries out the reaction adenosine(1518)/adenosine(1519) in 16S rRNA + 4 S-adenosyl-L-methionine = N(6)-dimethyladenosine(1518)/N(6)-dimethyladenosine(1519) in 16S rRNA + 4 S-adenosyl-L-homocysteine + 4 H(+). Its function is as follows. Specifically dimethylates two adjacent adenosines (A1518 and A1519) in the loop of a conserved hairpin near the 3'-end of 16S rRNA in the 30S particle. May play a critical role in biogenesis of 30S subunits. This chain is Ribosomal RNA small subunit methyltransferase A, found in Leptothrix cholodnii (strain ATCC 51168 / LMG 8142 / SP-6) (Leptothrix discophora (strain SP-6)).